We begin with the raw amino-acid sequence, 141 residues long: MSNKKIIKIIKLQIPGGKANPAPPIGPALGAAGVNIMGFCKEFNAATQDRPGDLLPVVITVYSDKTFSFVMKQPPVSSLIKKALGLESGSKIPNRNKVGKLARAQITAIAEQKMKDMDVVLLESAERMVEGTARSMGVDVE.

Belongs to the universal ribosomal protein uL11 family. Part of the ribosomal stalk of the 50S ribosomal subunit. Interacts with L10 and the large rRNA to form the base of the stalk. L10 forms an elongated spine to which L12 dimers bind in a sequential fashion forming a multimeric L10(L12)X complex. One or more lysine residues are methylated.

Its function is as follows. Forms part of the ribosomal stalk which helps the ribosome interact with GTP-bound translation factors. This Chlamydia muridarum (strain MoPn / Nigg) protein is Large ribosomal subunit protein uL11.